Reading from the N-terminus, the 61-residue chain is UPF0434 protein PSPA7_2181 (61 aa).

Belongs to the UPF0434 family.

This chain is UPF0434 protein PSPA7_2181, found in Pseudomonas paraeruginosa (strain DSM 24068 / PA7) (Pseudomonas aeruginosa (strain PA7)).